Reading from the N-terminus, the 133-residue chain is MKLKKTCIAITVAVGVISLSGCSTASALSGLLSDSPDVTAQVGAENTKQLAGVTAKADDKREVKVSDSNIGKIDSSVKKSVEVSTIQANTVNAESITVTKSGSWYDPVVCWILVFIVLLLFYFLIRKHEKKEA.

The N-terminal stretch at 1–21 is a signal peptide; that stretch reads MKLKKTCIAITVAVGVISLSG. Residue Cys-22 is the site of N-palmitoyl cysteine; by host attachment. The S-diacylglycerol cysteine; by host moiety is linked to residue Cys-22. Topologically, residues 22-104 are periplasmic; sequence CSTASALSGL…SITVTKSGSW (83 aa). A helical membrane pass occupies residues 105-125; it reads YDPVVCWILVFIVLLLFYFLI. At 126–133 the chain is on the cytoplasmic side; that stretch reads RKHEKKEA.

Its subcellular location is the host cell inner membrane. The protein resides in the host cell outer membrane. Its function is as follows. Disrupts the host outer membrane and participates in cell lysis during virus exit. The spanin complex conducts the final step in host lysis by disrupting the outer membrane after holin and endolysin action have permeabilized the inner membrane and degraded the host peptidoglycans. Host outer membrane disruption is possibly due to local fusion between the inner and outer membrane performed by the spanin. Functionally, seems to have a dominant negative lysis delay effect on gp11 function. May serve as an intrinsic anti-spanin, providing another level of regulation for u-spanin function. The chain is U-spanin from Escherichia phage T1 (Bacteriophage T1).